The following is a 180-amino-acid chain: D-glycero-beta-D-manno-heptose-1,7-bisphosphate 7-phosphatase (180 aa).

Asp-14 serves as the catalytic Nucleophile. Residues Asp-14 and Asp-16 each coordinate Mg(2+). Substrate contacts are provided by residues Asp-14 to Asp-16, Asn-22 to Tyr-25, and Thr-56 to Ser-59. Asp-16 (proton donor) is an active-site residue. 4 residues coordinate Zn(2+): Cys-95, His-97, Cys-110, and His-112. Position 113–114 (Arg-113–Lys-114) interacts with substrate. Asp-139 contacts Mg(2+).

This sequence belongs to the gmhB family. In terms of assembly, monomer. Mg(2+) serves as cofactor.

It is found in the cytoplasm. It carries out the reaction D-glycero-beta-D-manno-heptose 1,7-bisphosphate + H2O = D-glycero-beta-D-manno-heptose 1-phosphate + phosphate. It participates in nucleotide-sugar biosynthesis; ADP-L-glycero-beta-D-manno-heptose biosynthesis; ADP-L-glycero-beta-D-manno-heptose from D-glycero-beta-D-manno-heptose 7-phosphate: step 2/4. The protein operates within bacterial outer membrane biogenesis; LPS core biosynthesis. Functionally, converts the D-glycero-beta-D-manno-heptose 1,7-bisphosphate (beta-HBP) intermediate into D-glycero-beta-D-manno-heptose 1-phosphate by removing the phosphate group at the C-7 position. Also catalyzes the dephosphorylation of D-glycero-alpha-D-manno-heptose 1,7-bisphosphate in vitro. The protein is D-glycero-beta-D-manno-heptose-1,7-bisphosphate 7-phosphatase of Rhodopseudomonas palustris (strain ATCC BAA-98 / CGA009).